Here is a 131-residue protein sequence, read N- to C-terminus: Small ribosomal subunit protein uS11 (131 aa).

The protein belongs to the universal ribosomal protein uS11 family. As to quaternary structure, part of the 30S ribosomal subunit. Interacts with proteins S7 and S18. Binds to IF-3.

Its function is as follows. Located on the platform of the 30S subunit, it bridges several disparate RNA helices of the 16S rRNA. Forms part of the Shine-Dalgarno cleft in the 70S ribosome. This is Small ribosomal subunit protein uS11 from Trichodesmium erythraeum (strain IMS101).